Reading from the N-terminus, the 499-residue chain is Cytochrome P450 2M1 (499 aa).

C441 is a binding site for heme.

The protein belongs to the cytochrome P450 family. The cofactor is heme. As to expression, in kidney and in liver from juvenile and sexually mature trout from both sexes.

The protein localises to the endoplasmic reticulum membrane. Its subcellular location is the microsome membrane. The catalysed reaction is an organic molecule + reduced [NADPH--hemoprotein reductase] + O2 = an alcohol + oxidized [NADPH--hemoprotein reductase] + H2O + H(+). Functionally, has (omega-6)-hydroxylation activity toward lauric acid. The chain is Cytochrome P450 2M1 (cyp2m1) from Oncorhynchus mykiss (Rainbow trout).